A 206-amino-acid chain; its full sequence is Ribosomal RNA large subunit methyltransferase E (206 aa).

S-adenosyl-L-methionine-binding residues include G60, W62, D80, D96, and D121. K161 functions as the Proton acceptor in the catalytic mechanism.

Belongs to the class I-like SAM-binding methyltransferase superfamily. RNA methyltransferase RlmE family.

It localises to the cytoplasm. The catalysed reaction is uridine(2552) in 23S rRNA + S-adenosyl-L-methionine = 2'-O-methyluridine(2552) in 23S rRNA + S-adenosyl-L-homocysteine + H(+). Functionally, specifically methylates the uridine in position 2552 of 23S rRNA at the 2'-O position of the ribose in the fully assembled 50S ribosomal subunit. The sequence is that of Ribosomal RNA large subunit methyltransferase E from Nitrosospira multiformis (strain ATCC 25196 / NCIMB 11849 / C 71).